The primary structure comprises 118 residues: Small ribosomal subunit protein uS13 (118 aa).

A disordered region spans residues 95 to 118 (LPLRGQRTRTNARTRKGPRKAIKK).

Belongs to the universal ribosomal protein uS13 family. In terms of assembly, part of the 30S ribosomal subunit. Forms a loose heterodimer with protein S19. Forms two bridges to the 50S subunit in the 70S ribosome.

Located at the top of the head of the 30S subunit, it contacts several helices of the 16S rRNA. In the 70S ribosome it contacts the 23S rRNA (bridge B1a) and protein L5 of the 50S subunit (bridge B1b), connecting the 2 subunits; these bridges are implicated in subunit movement. Contacts the tRNAs in the A and P-sites. The protein is Small ribosomal subunit protein uS13 of Xylella fastidiosa (strain 9a5c).